A 173-amino-acid chain; its full sequence is NADH-ubiquinone oxidoreductase chain 6 (173 aa).

5 consecutive transmembrane segments (helical) span residues 1–21 (MTYFVMFLGFCFILGAVAVAS), 27–47 (YGVLGLVVGSVVGCGWLLSLG), 48–68 (VSFISLALFLVYLGGMLVVFV), 87–107 (VVIYGVGLVLVVLVGIVVGDF), and 139–159 (WGAGLFLVAGWGLLLTLFVVL).

It belongs to the complex I subunit 6 family.

Its subcellular location is the mitochondrion membrane. The catalysed reaction is a ubiquinone + NADH + 5 H(+)(in) = a ubiquinol + NAD(+) + 4 H(+)(out). In terms of biological role, core subunit of the mitochondrial membrane respiratory chain NADH dehydrogenase (Complex I) that is believed to belong to the minimal assembly required for catalysis. Complex I functions in the transfer of electrons from NADH to the respiratory chain. The immediate electron acceptor for the enzyme is believed to be ubiquinone. This Struthio camelus (Common ostrich) protein is NADH-ubiquinone oxidoreductase chain 6 (MT-ND6).